The following is a 511-amino-acid chain: 2-isopropylmalate synthase (511 aa).

The 263-residue stretch at 5–267 folds into the Pyruvate carboxyltransferase domain; sequence LIVFDTTLRD…DTRIDATQIV (263 aa). The Mn(2+) site is built by D14, H202, H204, and N238. The segment at 393-511 is regulatory domain; the sequence is RLVASRFHSE…SKLERLNPQL (119 aa).

The protein belongs to the alpha-IPM synthase/homocitrate synthase family. LeuA type 1 subfamily. In terms of assembly, homodimer. The cofactor is Mn(2+).

It is found in the cytoplasm. It carries out the reaction 3-methyl-2-oxobutanoate + acetyl-CoA + H2O = (2S)-2-isopropylmalate + CoA + H(+). The protein operates within amino-acid biosynthesis; L-leucine biosynthesis; L-leucine from 3-methyl-2-oxobutanoate: step 1/4. Catalyzes the condensation of the acetyl group of acetyl-CoA with 3-methyl-2-oxobutanoate (2-ketoisovalerate) to form 3-carboxy-3-hydroxy-4-methylpentanoate (2-isopropylmalate). This chain is 2-isopropylmalate synthase, found in Aromatoleum aromaticum (strain DSM 19018 / LMG 30748 / EbN1) (Azoarcus sp. (strain EbN1)).